The primary structure comprises 156 residues: Ribosome maturation factor RimP (156 aa).

This sequence belongs to the RimP family.

It is found in the cytoplasm. Functionally, required for maturation of 30S ribosomal subunits. This chain is Ribosome maturation factor RimP, found in Bacillus velezensis (strain DSM 23117 / BGSC 10A6 / LMG 26770 / FZB42) (Bacillus amyloliquefaciens subsp. plantarum).